We begin with the raw amino-acid sequence, 154 residues long: Ribosomal RNA large subunit methyltransferase H (154 aa).

2 residues coordinate S-adenosyl-L-methionine: Leu-71 and Gly-103.

The protein belongs to the RNA methyltransferase RlmH family. In terms of assembly, homodimer.

It localises to the cytoplasm. It carries out the reaction pseudouridine(1915) in 23S rRNA + S-adenosyl-L-methionine = N(3)-methylpseudouridine(1915) in 23S rRNA + S-adenosyl-L-homocysteine + H(+). Functionally, specifically methylates the pseudouridine at position 1915 (m3Psi1915) in 23S rRNA. The polypeptide is Ribosomal RNA large subunit methyltransferase H (Solidesulfovibrio magneticus (strain ATCC 700980 / DSM 13731 / RS-1) (Desulfovibrio magneticus)).